Reading from the N-terminus, the 362-residue chain is Peptide chain release factor 1 (362 aa).

Gln-238 is subject to N5-methylglutamine.

It belongs to the prokaryotic/mitochondrial release factor family. In terms of processing, methylated by PrmC. Methylation increases the termination efficiency of RF1.

The protein localises to the cytoplasm. Peptide chain release factor 1 directs the termination of translation in response to the peptide chain termination codons UAG and UAA. This is Peptide chain release factor 1 from Psychrobacter arcticus (strain DSM 17307 / VKM B-2377 / 273-4).